Here is a 143-residue protein sequence, read N- to C-terminus: Large ribosomal subunit protein uL11 (143 aa).

The protein belongs to the universal ribosomal protein uL11 family. Part of the ribosomal stalk of the 50S ribosomal subunit. Interacts with L10 and the large rRNA to form the base of the stalk. L10 forms an elongated spine to which L12 dimers bind in a sequential fashion forming a multimeric L10(L12)X complex. Post-translationally, one or more lysine residues are methylated.

Its function is as follows. Forms part of the ribosomal stalk which helps the ribosome interact with GTP-bound translation factors. This Zymomonas mobilis subsp. mobilis (strain ATCC 31821 / ZM4 / CP4) protein is Large ribosomal subunit protein uL11.